Reading from the N-terminus, the 466-residue chain is 3-isopropylmalate dehydratase large subunit (466 aa).

Cys347, Cys407, and Cys410 together coordinate [4Fe-4S] cluster.

The protein belongs to the aconitase/IPM isomerase family. LeuC type 1 subfamily. Heterodimer of LeuC and LeuD. [4Fe-4S] cluster is required as a cofactor.

It carries out the reaction (2R,3S)-3-isopropylmalate = (2S)-2-isopropylmalate. The protein operates within amino-acid biosynthesis; L-leucine biosynthesis; L-leucine from 3-methyl-2-oxobutanoate: step 2/4. Catalyzes the isomerization between 2-isopropylmalate and 3-isopropylmalate, via the formation of 2-isopropylmaleate. The chain is 3-isopropylmalate dehydratase large subunit from Escherichia coli O9:H4 (strain HS).